The primary structure comprises 1013 residues: Putative helicase mov-10-B.1 (1013 aa).

2 stretches are compositionally biased toward polar residues: residues 91 to 103 (QWSRPYRSQQNHA) and 113 to 123 (RPSTTRVSDPS). The tract at residues 91-129 (QWSRPYRSQQNHATPHLNDAISRPSTTRVSDPSSVPEPE) is disordered. 550 to 557 (GPPGTGKT) is an ATP binding site. Residues 672 to 675 (DEAG) carry the DEAG box motif.

This sequence belongs to the DNA2/NAM7 helicase family. SDE3 subfamily.

It localises to the cytoplasm. Its subcellular location is the P-body. It carries out the reaction ATP + H2O = ADP + phosphate + H(+). In terms of biological role, probable RNA helicase. Required for RNA-mediated gene silencing by the RNA-induced silencing complex (RISC). Required for both miRNA-mediated translational repression and miRNA-mediated cleavage of complementary mRNAs by RISC. The protein is Putative helicase mov-10-B.1 (mov10b.1) of Danio rerio (Zebrafish).